The sequence spans 61 residues: Large ribosomal subunit protein uL30 (61 aa).

This sequence belongs to the universal ribosomal protein uL30 family. In terms of assembly, part of the 50S ribosomal subunit.

This is Large ribosomal subunit protein uL30 from Legionella pneumophila (strain Paris).